The primary structure comprises 100 residues: Urease subunit gamma (100 aa).

The protein belongs to the urease gamma subunit family. In terms of assembly, heterotrimer of UreA (gamma), UreB (beta) and UreC (alpha) subunits. Three heterotrimers associate to form the active enzyme.

The protein resides in the cytoplasm. It carries out the reaction urea + 2 H2O + H(+) = hydrogencarbonate + 2 NH4(+). It participates in nitrogen metabolism; urea degradation; CO(2) and NH(3) from urea (urease route): step 1/1. This Acinetobacter baumannii (strain AB307-0294) protein is Urease subunit gamma.